A 227-amino-acid polypeptide reads, in one-letter code: 2-C-methyl-D-erythritol 4-phosphate cytidylyltransferase (227 aa).

This sequence belongs to the IspD/TarI cytidylyltransferase family. IspD subfamily.

It catalyses the reaction 2-C-methyl-D-erythritol 4-phosphate + CTP + H(+) = 4-CDP-2-C-methyl-D-erythritol + diphosphate. The protein operates within isoprenoid biosynthesis; isopentenyl diphosphate biosynthesis via DXP pathway; isopentenyl diphosphate from 1-deoxy-D-xylulose 5-phosphate: step 2/6. Functionally, catalyzes the formation of 4-diphosphocytidyl-2-C-methyl-D-erythritol from CTP and 2-C-methyl-D-erythritol 4-phosphate (MEP). This chain is 2-C-methyl-D-erythritol 4-phosphate cytidylyltransferase, found in Nostoc punctiforme (strain ATCC 29133 / PCC 73102).